Consider the following 413-residue polypeptide: 2,3-diketo-5-methylthiopentyl-1-phosphate enolase (413 aa).

Lysine 98 serves as the catalytic Proton acceptor. Substrate-binding positions include lysine 147, 173-176 (KDDE), histidine 264, glycine 337, and 359-360 (GG). The Mg(2+) site is built by lysine 173, aspartate 175, and glutamate 176. N6-carboxylysine is present on lysine 173.

The protein belongs to the RuBisCO large chain family. Type IV subfamily. As to quaternary structure, homodimer. Mg(2+) is required as a cofactor.

The enzyme catalyses 5-methylsulfanyl-2,3-dioxopentyl phosphate = 2-hydroxy-5-methylsulfanyl-3-oxopent-1-enyl phosphate. Its pathway is amino-acid biosynthesis; L-methionine biosynthesis via salvage pathway; L-methionine from S-methyl-5-thio-alpha-D-ribose 1-phosphate: step 3/6. Its function is as follows. Catalyzes the enolization of 2,3-diketo-5-methylthiopentyl-1-phosphate (DK-MTP-1-P) into 2-hydroxy-3-keto-5-methylthiopentenyl-1-phosphate (HK-MTPenyl-1-P). This Geobacillus thermodenitrificans (strain NG80-2) protein is 2,3-diketo-5-methylthiopentyl-1-phosphate enolase.